Consider the following 478-residue polypeptide: F-box protein YDR306C (478 aa).

Positions 1 to 14 (MANKSRPKKIKAPY) are enriched in basic residues. 2 disordered regions span residues 1 to 32 (MANK…DNKA) and 67 to 101 (RLSN…VIES). Positions 80–90 (QSPSSSSTSSS) are enriched in low complexity. The segment covering 91–101 (KGEKNGKVIES) has biased composition (basic and acidic residues). The region spanning 112–173 (KMVLPWEIQH…CLPKLYYAPA (62 aa)) is the F-box domain.

In terms of assembly, interacts with SKP1. Component of the probable SCF(YDR306C) complex containing CDC53, SKP1, RBX1 and YDR306C. In terms of processing, autoubiquitinated by the E3 ubiquitin ligase complex in conjunction with the E2 enzyme CDC34.

It functions in the pathway protein modification; protein ubiquitination. In terms of biological role, substrate recognition component of a SCF (SKP1-CUL1-F-box protein) E3 ubiquitin-protein ligase complex which mediates the ubiquitination and subsequent proteasomal degradation of target proteins. Probably recognizes and binds to phosphorylated target proteins. The polypeptide is F-box protein YDR306C (Saccharomyces cerevisiae (strain ATCC 204508 / S288c) (Baker's yeast)).